The following is a 428-amino-acid chain: UDP-N-acetylglucosamine 1-carboxyvinyltransferase 2 (428 aa).

K22–N23 is a phosphoenolpyruvate binding site. Position 92 (R92) interacts with UDP-N-acetyl-alpha-D-glucosamine. C116 functions as the Proton donor in the catalytic mechanism. The residue at position 116 (C116) is a 2-(S-cysteinyl)pyruvic acid O-phosphothioketal. UDP-N-acetyl-alpha-D-glucosamine-binding positions include R121–Q125, D304, and I326.

This sequence belongs to the EPSP synthase family. MurA subfamily.

Its subcellular location is the cytoplasm. It catalyses the reaction phosphoenolpyruvate + UDP-N-acetyl-alpha-D-glucosamine = UDP-N-acetyl-3-O-(1-carboxyvinyl)-alpha-D-glucosamine + phosphate. It participates in cell wall biogenesis; peptidoglycan biosynthesis. Its function is as follows. Cell wall formation. Adds enolpyruvyl to UDP-N-acetylglucosamine. The protein is UDP-N-acetylglucosamine 1-carboxyvinyltransferase 2 of Oceanobacillus iheyensis (strain DSM 14371 / CIP 107618 / JCM 11309 / KCTC 3954 / HTE831).